A 371-amino-acid polypeptide reads, in one-letter code: uncharacterized protein (371 aa).

To A.pernix APE_1804 and S.solfataricus SSO2105.

This is an uncharacterized protein from Aeropyrum pernix (strain ATCC 700893 / DSM 11879 / JCM 9820 / NBRC 100138 / K1).